A 147-amino-acid chain; its full sequence is Ponticulin-like protein C3 (147 aa).

Residues 1-20 (MKFTKSLLLLIVAVFASSNA) form the signal peptide. N118 carries the GPI-like-anchor amidated asparagine lipid modification. N118 carries an N-linked (GlcNAc...) asparagine glycan. A propeptide spans 119 to 147 (SSESDSSDSTRIGASFALFALALLSMLAL) (removed in mature form).

This sequence belongs to the ponticulin family. In terms of processing, the GPI-like-anchor contains a phosphoceramide group, rather than a phosphatidyl group.

The protein localises to the cell membrane. In Dictyostelium discoideum (Social amoeba), this protein is Ponticulin-like protein C3 (ponC3).